The chain runs to 290 residues: Prepilin leader peptidase/N-methyltransferase (290 aa).

A helical transmembrane segment spans residues 14–34 (LYFSLVFLFSLMIGSFLNVVI). Residues cysteine 74, cysteine 77, cysteine 99, and cysteine 102 each coordinate Zn(2+). 6 consecutive transmembrane segments (helical) span residues 106–126 (ISAR…AVAM), 130–150 (PGWG…LTFI), 161–181 (LTLP…FVSL), 185–205 (VIGA…FKLL), 232–252 (PIVL…LILL), and 261–281 (IPFG…GDSI).

It belongs to the peptidase A24 family. The cofactor is Zn(2+).

It is found in the cell inner membrane. It catalyses the reaction Typically cleaves a -Gly-|-Phe- bond to release an N-terminal, basic peptide of 5-8 residues from type IV prepilin, and then N-methylates the new N-terminal amino group, the methyl donor being S-adenosyl-L-methionine.. In terms of biological role, plays an essential role in type IV pili and type II pseudopili formation by proteolytically removing the leader sequence from substrate proteins and subsequently monomethylating the alpha-amino group of the newly exposed N-terminal phenylalanine. The sequence is that of Prepilin leader peptidase/N-methyltransferase (tapD) from Aeromonas hydrophila.